The sequence spans 581 residues: Pentatricopeptide repeat-containing protein At3g56550 (581 aa).

PPR repeat units lie at residues 70–104, 106–140, 141–171, 172–206, 207–241, 242–272, 273–307, 308–338, and 344–378; these read STSD…SVSR, DLFT…GFLD, DAIV…MPVR, DLVS…GVCG, DSYT…RCES, CVFV…MRKR, DVLT…GVRP, NAIT…MSSQ, and NVKH…EDPV. The segment at 379 to 454 is type E motif; sequence LWRTLLGSCK…VPGWSWIEIG (76 aa). A type E(+) motif region spans residues 455–485; it reads DQVHKFVVDDKMHPESAVIYSELGEVINRAI. The type DYW motif stretch occupies residues 486-581; sequence LAGYKPEDSN…DGICSCNDYW (96 aa).

It belongs to the PPR family. PCMP-H subfamily.

The protein is Pentatricopeptide repeat-containing protein At3g56550 (PCMP-H80) of Arabidopsis thaliana (Mouse-ear cress).